The primary structure comprises 1082 residues: Protein argonaute 1A (1082 aa).

2 disordered regions span residues 17 to 148 (MMRK…ASQD) and 187 to 208 (GQSP…VRFP). Residues 29–38 (GESSGTQQAT) show a composition bias toward polar residues. Gly residues predominate over residues 72-100 (GRGGGQHQGRGGRYQGRGGPTSHQPGGGP). A PAZ domain is found at 420 to 533 (PVIDFVAQLL…LPMEVCKIVE (114 aa)). The 322-residue stretch at 709–1030 (LLIAILPDNN…AAFRARFYME (322 aa)) folds into the Piwi domain. The tract at residues 1036–1065 (SGSMASGAHTRGGGPLPGARSTKPAGNVAV) is disordered.

The protein belongs to the argonaute family. Ago subfamily.

Functionally, probably involved in the RNA silencing pathway. May bind to short RNAs such as microRNAs (miRNAs) or short interfering RNAs (siRNAs), and represses the translation of mRNAs which are complementary to them. The polypeptide is Protein argonaute 1A (AGO1A) (Oryza sativa subsp. japonica (Rice)).